We begin with the raw amino-acid sequence, 511 residues long: Maturase K (511 aa).

It belongs to the intron maturase 2 family. MatK subfamily.

It is found in the plastid. Its subcellular location is the chloroplast. In terms of biological role, usually encoded in the trnK tRNA gene intron. Probably assists in splicing its own and other chloroplast group II introns. The protein is Maturase K of Phleum pratense (Common timothy).